Reading from the N-terminus, the 510-residue chain is Olfactomedin-4 (510 aa).

A signal peptide spans 1–20 (MRPGLSFLLALLFFLGQAAG). Residues asparagine 72 and asparagine 136 are each glycosylated (N-linked (GlcNAc...) asparagine). A coiled-coil region spans residues 155 to 234 (DFELIKVEVK…ECEASKDQNT (80 aa)). Positions 245-507 (SCGHGGVVNI…LLNYDLSVLQ (263 aa)) constitute an Olfactomedin-like domain. Cysteines 246 and 437 form a disulfide. Residue asparagine 253 is glycosylated (N-linked (GlcNAc...) asparagine).

Homomultimer; disulfide-linked. Interacts with NDUFA13. Interacts with cell surface lectins (locutions ricinus communis agglutinin I, concanavalin-A and wheat germ agglutinin) and cadherin. N-glycosylated. As to expression, expressed during myeloid lineage development. Much higher expression in bone marrow neutrophils than in peripheral blood neutrophils (at protein level). Strongly expressed in the prostate, small intestine and colon and moderately expressed in the bone marrow and stomach. Overexpressed in some pancreatic cancer tissues.

The protein resides in the secreted. It is found in the extracellular space. The protein localises to the mitochondrion. May promote proliferation of pancreatic cancer cells by favoring the transition from the S to G2/M phase. In myeloid leukemic cell lines, inhibits cell growth and induces cell differentiation and apoptosis. May play a role in the inhibition of EIF4EBP1 phosphorylation/deactivation. Facilitates cell adhesion, most probably through interaction with cell surface lectins and cadherin. This is Olfactomedin-4 (OLFM4) from Homo sapiens (Human).